The sequence spans 113 residues: MGKCSMKKKGVGKNVGVGKKVQKKRSISTAERKRTKLQVEKLNKSSETMIPTLLREASTQEPAKLKAETTLKAEELIKDQEKDSKVREQIRTEKSKTNDSMLKQIEMISGFSL.

Basic residues predominate over residues 1–11 (MGKCSMKKKGV). A disordered region spans residues 1 to 35 (MGKCSMKKKGVGKNVGVGKKVQKKRSISTAERKRT).

This sequence belongs to the ADF1 family.

The protein localises to the nucleus. In terms of biological role, transcriptional repressor which negatively regulates transcription of FYV5 by binding to the promoter on the sense strand. The sequence is that of Antisense of depressing factor protein 1 from Saccharomyces cerevisiae (strain ATCC 204508 / S288c) (Baker's yeast).